Consider the following 90-residue polypeptide: Nodulation protein F (90 aa).

The region spanning 4–89 is the Carrier domain; sequence QLESEIIGII…RHSGSHPRLA (86 aa). The residue at position 46 (serine 46) is an O-(pantetheine 4'-phosphoryl)serine. A disordered region spans residues 65–90; the sequence is RDEHGRGVVGSPERRRHSGSHPRLAH. Basic residues predominate over residues 78–90; that stretch reads RRRHSGSHPRLAH.

4'-phosphopantetheine is transferred from CoA to a specific serine of apo-NodF.

Proposed to synthesize nod factor fatty acyl chain. Involved in trans-2,trans-4,trans-6,cis-11-octadecatetraenoic acid biosynthesis. This Rhizobium meliloti (Ensifer meliloti) protein is Nodulation protein F (nodF).